The chain runs to 354 residues: Carbamoyl phosphate synthase arginine-specific small chain (354 aa).

Residues 1 to 163 (MKAYLHVASG…RTIETYGEGG (163 aa)) are CPSase. Residues Ser-46, Gly-213, and Gly-215 each coordinate L-glutamine. The Glutamine amidotransferase type-1 domain occupies 165–352 (HLVLVDFGYK…LQTVFKGENV (188 aa)). Residue Cys-240 is the Nucleophile of the active site. Residues Leu-241, Gln-244, Asn-282, and Tyr-285 each contribute to the L-glutamine site. Residues His-325 and Glu-327 contribute to the active site.

Belongs to the CarA family. Composed of two chains; the small (or glutamine) chain promotes the hydrolysis of glutamine to ammonia, which is used by the large (or ammonia) chain to synthesize carbamoyl phosphate. Tetramer of heterodimers (alpha,beta)4.

The catalysed reaction is hydrogencarbonate + L-glutamine + 2 ATP + H2O = carbamoyl phosphate + L-glutamate + 2 ADP + phosphate + 2 H(+). The enzyme catalyses L-glutamine + H2O = L-glutamate + NH4(+). The protein operates within amino-acid biosynthesis; L-arginine biosynthesis; carbamoyl phosphate from bicarbonate: step 1/1. Small subunit of the glutamine-dependent carbamoyl phosphate synthetase (CPSase). CPSase catalyzes the formation of carbamoyl phosphate from the ammonia moiety of glutamine, carbonate, and phosphate donated by ATP, constituting the first step of the biosynthetic pathway leading to arginine and/or urea. The small subunit (glutamine amidotransferase) binds and cleaves glutamine to supply the large subunit with the substrate ammonia. The protein is Carbamoyl phosphate synthase arginine-specific small chain of Geobacillus stearothermophilus (Bacillus stearothermophilus).